The sequence spans 501 residues: Nuclear receptor-binding protein 2 (501 aa).

A disordered region spans residues 1–33 (MAAPEPAPRRAREREREREDESEDESDILEESP). Over residues 7–19 (APRRARERERERE) the composition is skewed to basic and acidic residues. Acidic residues predominate over residues 20-30 (DESEDESDILE). The Protein kinase domain maps to 38 to 306 (QKRREQVNQG…AHSLLFHRVL (269 aa)). T409 and T411 each carry phosphothreonine.

It belongs to the protein kinase superfamily. Ser/Thr protein kinase family.

Its subcellular location is the cytoplasm. Functionally, may regulate apoptosis of neural progenitor cells during their differentiation. This is Nuclear receptor-binding protein 2 from Homo sapiens (Human).